A 195-amino-acid polypeptide reads, in one-letter code: Probable GTP-binding protein EngB (195 aa).

An EngB-type G domain is found at 24 to 195 (DIPEIALAGR…AAWDAILSKI (172 aa)). GTP-binding positions include 32 to 39 (GRSNVGKS), 59 to 63 (GKTQL), 77 to 80 (DVPG), 144 to 147 (TKAD), and 176 to 178 (FSS). 2 residues coordinate Mg(2+): Ser-39 and Thr-61.

Belongs to the TRAFAC class TrmE-Era-EngA-EngB-Septin-like GTPase superfamily. EngB GTPase family. Mg(2+) is required as a cofactor.

Its function is as follows. Necessary for normal cell division and for the maintenance of normal septation. The chain is Probable GTP-binding protein EngB from Streptococcus sanguinis (strain SK36).